We begin with the raw amino-acid sequence, 48 residues long: Delta-actitoxin-Bcg1c (48 aa).

3 disulfide bridges follow: C4-C45, C6-C35, and C28-C46.

Its subcellular location is the secreted. The protein resides in the nematocyst. Binds specifically to voltage-gated sodium channels SCN1A/Nav1.1, thereby delaying their inactivation during signal transduction. The polypeptide is Delta-actitoxin-Bcg1c (Bunodosoma cangicum (Sea anemone)).